Here is a 442-residue protein sequence, read N- to C-terminus: Histidinol dehydrogenase (442 aa).

A disordered region spans residues 1-20; it reads MLNVTDLRGQTPSKSDIRRA. Tyr-129, Gln-193, and Asn-218 together coordinate NAD(+). Positions 241, 263, and 266 each coordinate substrate. Positions 263 and 266 each coordinate Zn(2+). Residues Glu-332 and His-333 each act as proton acceptor in the active site. Residues His-333, Asp-366, Glu-420, and His-425 each coordinate substrate. Residue Asp-366 participates in Zn(2+) binding. Residue His-425 coordinates Zn(2+).

This sequence belongs to the histidinol dehydrogenase family. The cofactor is Zn(2+).

The catalysed reaction is L-histidinol + 2 NAD(+) + H2O = L-histidine + 2 NADH + 3 H(+). Its pathway is amino-acid biosynthesis; L-histidine biosynthesis; L-histidine from 5-phospho-alpha-D-ribose 1-diphosphate: step 9/9. Its function is as follows. Catalyzes the sequential NAD-dependent oxidations of L-histidinol to L-histidinaldehyde and then to L-histidine. The chain is Histidinol dehydrogenase from Corynebacterium glutamicum (strain ATCC 13032 / DSM 20300 / JCM 1318 / BCRC 11384 / CCUG 27702 / LMG 3730 / NBRC 12168 / NCIMB 10025 / NRRL B-2784 / 534).